A 207-amino-acid chain; its full sequence is Tetrathionate reductase subunit B (207 aa).

The signal sequence occupies residues 1–28 (MLISKTLIFYQVVNIVSQKGSGKRRWKM). 3 4Fe-4S ferredoxin-type domains span residues 34 to 63 (YVYV…PVGY), 75 to 106 (GRVA…KTEE), and 107 to 136 (GLVL…RNPV). Residues cysteine 43, cysteine 46, cysteine 49, cysteine 53, cysteine 84, cysteine 87, cysteine 92, cysteine 96, cysteine 116, cysteine 119, cysteine 122, cysteine 126, cysteine 143, cysteine 146, cysteine 157, and cysteine 161 each coordinate [4Fe-4S] cluster.

Probably composed of three subunits: TtrA, TtrB and TtrC.

The protein localises to the cell membrane. Its function is as follows. Part of a membrane-bound tetrathionate reductase that catalyzes the reduction of tetrathionate to thiosulfate. TtrB is probably involved in transfer of electrons from TtrC to TtrA. This chain is Tetrathionate reductase subunit B (ttrB), found in Archaeoglobus fulgidus (strain ATCC 49558 / DSM 4304 / JCM 9628 / NBRC 100126 / VC-16).